A 70-amino-acid polypeptide reads, in one-letter code: uncharacterized protein (70 aa).

The segment at 21–43 (YECPICGEIYIKRKSMITHLRKH) adopts a C2H2-type zinc-finger fold.

This is an uncharacterized protein from Saccharolobus islandicus (Sulfolobus islandicus).